The primary structure comprises 244 residues: Gas vesicle protein F (244 aa).

The tract at residues 1 to 109 (MTVGLYLYGI…QLKELFAKLS (109 aa)) is N-terminus. Residues 110–233 (GQREVSIKIF…GDRLRIRYNN (124 aa)) form a C-terminus, modifed ferredoxin fold region. Residues 234–244 (LTAPYTFAQLI) are C-tail.

It belongs to the gas vesicle GvpF/GvpL family. In terms of assembly, binds GvpA.

The protein resides in the gas vesicle. In terms of biological role, a minor component of the gas vesicle, may be involved in preventing GvpA aggregation during gas vesicle nucleation. Gas vesicles (GV) are hollow, gas filled proteinaceous nanostructures. During planktonic growth they allow positioning of the organism at a favorable depth for light or nutrient acquisition. This is Gas vesicle protein F from Microcystis aeruginosa (strain PCC 7806).